The primary structure comprises 287 residues: D-apionate oxidoisomerase (287 aa).

NAD(+)-binding positions include 13 to 15 (GKM), E36, and D71. Zn(2+) contacts are provided by H116 and E186.

Belongs to the ApnO family. The cofactor is Zn(2+).

The catalysed reaction is D-apionate + NAD(+) = 3-oxoisoapionate + NADH + H(+). Its pathway is carbohydrate metabolism. In terms of biological role, involved in catabolism of D-apiose. Catalyzes the conversion of D-apionate to 3-oxo-isoapionate. The protein is D-apionate oxidoisomerase of Blautia hydrogenotrophica (strain DSM 10507 / JCM 14656 / S5a33) (Ruminococcus hydrogenotrophicus).